We begin with the raw amino-acid sequence, 520 residues long: Cholesterol side-chain cleavage enzyme, mitochondrial (520 aa).

The transit peptide at 1-39 directs the protein to the mitochondrion; the sequence is MLVRGLPLRSVLVKGCQPLLSAPREGPGHPRVPTGEGAG. The interval 19–47 is disordered; it reads LLSAPREGPGHPRVPTGEGAGMSSHSPRP. A heme-binding site is contributed by cysteine 461.

It belongs to the cytochrome P450 family. As to quaternary structure, interacts with FDX1/adrenodoxin. Heme is required as a cofactor.

The protein localises to the mitochondrion inner membrane. The catalysed reaction is 6 reduced [adrenodoxin] + cholesterol + 3 O2 + 6 H(+) = 4-methylpentanal + pregnenolone + 6 oxidized [adrenodoxin] + 4 H2O. It catalyses the reaction 2 reduced [adrenodoxin] + cholesterol + O2 + 2 H(+) = (22R)-hydroxycholesterol + 2 oxidized [adrenodoxin] + H2O. The enzyme catalyses (22R)-hydroxycholesterol + 2 reduced [adrenodoxin] + O2 + 2 H(+) = (20R,22R)-20,22-dihydroxycholesterol + 2 oxidized [adrenodoxin] + H2O. It carries out the reaction (20R,22R)-20,22-dihydroxycholesterol + 2 reduced [adrenodoxin] + O2 + 2 H(+) = 4-methylpentanal + pregnenolone + 2 oxidized [adrenodoxin] + 2 H2O. The protein operates within lipid metabolism; C21-steroid hormone metabolism. It participates in steroid metabolism; cholesterol metabolism. In terms of biological role, a cytochrome P450 monooxygenase that catalyzes the side-chain hydroxylation and cleavage of cholesterol to pregnenolone, the precursor of most steroid hormones. Catalyzes three sequential oxidation reactions of cholesterol, namely the hydroxylation at C22 followed with the hydroxylation at C20 to yield 20R,22R-hydroxycholesterol that is further cleaved between C20 and C22 to yield the C21-steroid pregnenolone and 4-methylpentanal. Mechanistically, uses molecular oxygen inserting one oxygen atom into a substrate and reducing the second into a water molecule. Two electrons are provided by NADPH via a two-protein mitochondrial transfer system comprising flavoprotein FDXR (adrenodoxin/ferredoxin reductase) and nonheme iron-sulfur protein FDX1 or FDX2 (adrenodoxin/ferredoxin). The chain is Cholesterol side-chain cleavage enzyme, mitochondrial (CYP11A1) from Equus caballus (Horse).